Reading from the N-terminus, the 127-residue chain is Holo-[acyl-carrier-protein] synthase (127 aa).

Positions 9 and 58 each coordinate Mg(2+).

This sequence belongs to the P-Pant transferase superfamily. AcpS family. Mg(2+) is required as a cofactor.

It localises to the cytoplasm. It carries out the reaction apo-[ACP] + CoA = holo-[ACP] + adenosine 3',5'-bisphosphate + H(+). In terms of biological role, transfers the 4'-phosphopantetheine moiety from coenzyme A to a Ser of acyl-carrier-protein. This is Holo-[acyl-carrier-protein] synthase from Shewanella oneidensis (strain ATCC 700550 / JCM 31522 / CIP 106686 / LMG 19005 / NCIMB 14063 / MR-1).